Here is a 128-residue protein sequence, read N- to C-terminus: 14 kDa zinc-binding protein (128 aa).

Residues 18–128 enclose the HIT domain; it reads IFDKIIKKEI…GGRQMNWPPG (111 aa). Positions 112–116 match the Histidine triad motif motif; that stretch reads HIHVH.

In terms of assembly, homodimer.

This chain is 14 kDa zinc-binding protein (ZBP14), found in Zea mays (Maize).